Here is a 405-residue protein sequence, read N- to C-terminus: MRAAGILTPGALWAPGPSDTRDERRHDAGRLQPALPGDGRGPLRPGVTRMEGLLHASSVAQQGAGALSGRGERASGSRGTDGGHVGTPGGSDPARGPRFDLRITPGGYLWWYLDALSDDGDHGLTIIAMLGSVFSPYYAWARRRGNPDPLNHCALNVALYGKAGKRWTMTERGRKALRQAPGRLDIGPSHLTWDGTALTIDVNEITAPIPSRVRGRIRVIPAAVNAREFTLDPAERHVWWPIAPISRVEVDLEKPALRWSGHGYLDSNRGEEPLEDAFQCWDWSRANTPSGTTMLYDVTARHGTGASLALRFNASGEVEEFPPPPRVRLPTTGIWRIKRGTQCEAGHQARVVETLEDTPFYARSLVETRLAGETATCVHESLSLDRFASPVVQLMLPFRMPRVGG.

Disordered stretches follow at residues 1 to 47 (MRAA…RPGV) and 61 to 98 (QQGA…RGPR). Residues 19 to 29 (DTRDERRHDAG) are compositionally biased toward basic and acidic residues. The segment covering 33 to 46 (PALPGDGRGPLRPG) has biased composition (low complexity). Gly residues predominate over residues 79–89 (GTDGGHVGTPG).

This sequence belongs to the CrtC hydratase family.

The enzyme catalyses rhodopin = all-trans-lycopene + H2O. It catalyses the reaction 1,1'-dihydroxy-1,1',2,2'-tetrahydrolycopene = rhodopin + H2O. In terms of biological role, involved in the biosynthesis of carotenoids spirilloxanthin. Catalyzes the hydration of lycopene to the corresponding hydroxylated carotenoids 1-HO-lycopene and 1,1'-(HO)2-lycopene. Can also act on geranylgeraniol. In Thiocapsa roseopersicina, this protein is Acyclic carotenoid 1,2-hydratase (crtC).